A 1070-amino-acid polypeptide reads, in one-letter code: DNA-directed RNA polymerase subunit beta (1070 aa).

The protein belongs to the RNA polymerase beta chain family. In plastids the minimal PEP RNA polymerase catalytic core is composed of four subunits: alpha, beta, beta', and beta''. When a (nuclear-encoded) sigma factor is associated with the core the holoenzyme is formed, which can initiate transcription.

The protein localises to the plastid. It is found in the chloroplast. The catalysed reaction is RNA(n) + a ribonucleoside 5'-triphosphate = RNA(n+1) + diphosphate. Its function is as follows. DNA-dependent RNA polymerase catalyzes the transcription of DNA into RNA using the four ribonucleoside triphosphates as substrates. The chain is DNA-directed RNA polymerase subunit beta from Solanum lycopersicum (Tomato).